Reading from the N-terminus, the 282-residue chain is Heterogeneous nuclear ribonucleoprotein C (282 aa).

The RRM domain maps to serine 17–glutamate 88. 2 disordered regions span residues alanine 131–glycine 177 and glutamine 208–serine 282. A Nuclear localization signal motif is present at residues proline 141 to valine 147. Over residues serine 161–serine 172 the composition is skewed to low complexity. Positions glycine 177–aspartate 217 form a coiled coil. 2 stretches are compositionally biased toward basic and acidic residues: residues glutamine 208–aspartate 217 and leucine 224–glutamate 235. Composition is skewed to acidic residues over residues glutamate 236–leucine 257 and lysine 265–serine 282.

Belongs to the RRM HNRPC family. RALY subfamily. In terms of assembly, tetramer.

The protein localises to the nucleus. In terms of biological role, binds pre-mRNA and nucleates the assembly of 40S hnRNP particles. Interacts with poly-U tracts in the 3'-UTR or 5'-UTR of mRNA and modulates the stability and the level of translation of bound mRNA molecules. Single HNRNPC tetramers bind 230-240 nucleotides. Trimers of HNRNPC tetramers bind 700 nucleotides. May play a role in the early steps of spliceosome assembly and pre-mRNA splicing. N6-methyladenosine (m6A) has been shown to alter the local structure in mRNAs and long non-coding RNAs (lncRNAs) via a mechanism named 'm(6)A-switch', facilitating binding of HNRNPC, leading to regulation of mRNA splicing. The sequence is that of Heterogeneous nuclear ribonucleoprotein C (hnrnpc) from Xenopus laevis (African clawed frog).